A 176-amino-acid polypeptide reads, in one-letter code: RNA polymerase sigma factor SigZ (176 aa).

The short motif at 30–43 (DLLQIVFMKIQVHL) is the Polymerase core binding element. The H-T-H motif DNA-binding region spans 125 to 144 (QKELSEKLGISYSGAKSRVQ).

It belongs to the sigma-70 factor family. ECF subfamily.

Functionally, sigma factors are initiation factors that promote the attachment of RNA polymerase to specific initiation sites and are then released. The polypeptide is RNA polymerase sigma factor SigZ (sigZ) (Bacillus subtilis (strain 168)).